A 210-amino-acid chain; its full sequence is Ribosomal RNA large subunit methyltransferase E (210 aa).

5 residues coordinate S-adenosyl-L-methionine: Gly67, Trp69, Asp87, Asp103, and Asp128. Lys168 acts as the Proton acceptor in catalysis.

This sequence belongs to the class I-like SAM-binding methyltransferase superfamily. RNA methyltransferase RlmE family.

It localises to the cytoplasm. It carries out the reaction uridine(2552) in 23S rRNA + S-adenosyl-L-methionine = 2'-O-methyluridine(2552) in 23S rRNA + S-adenosyl-L-homocysteine + H(+). In terms of biological role, specifically methylates the uridine in position 2552 of 23S rRNA at the 2'-O position of the ribose in the fully assembled 50S ribosomal subunit. This chain is Ribosomal RNA large subunit methyltransferase E, found in Psychrobacter cryohalolentis (strain ATCC BAA-1226 / DSM 17306 / VKM B-2378 / K5).